A 62-amino-acid polypeptide reads, in one-letter code: Large ribosomal subunit protein bL28 (62 aa).

The protein belongs to the bacterial ribosomal protein bL28 family.

The polypeptide is Large ribosomal subunit protein bL28 (Helicobacter hepaticus (strain ATCC 51449 / 3B1)).